Consider the following 529-residue polypeptide: tRNA-2-methylthio-N(6)-dimethylallyladenosine synthase (529 aa).

Residues Arg18 to His134 form the MTTase N-terminal domain. 6 residues coordinate [4Fe-4S] cluster: Cys27, Cys63, Cys97, Cys171, Cys175, and Cys178. One can recognise a Radical SAM core domain in the interval Arg157–Glu404. The TRAM domain occupies Gln407–Leu486.

It belongs to the methylthiotransferase family. MiaB subfamily. In terms of assembly, monomer. The cofactor is [4Fe-4S] cluster.

The protein localises to the cytoplasm. The enzyme catalyses N(6)-dimethylallyladenosine(37) in tRNA + (sulfur carrier)-SH + AH2 + 2 S-adenosyl-L-methionine = 2-methylsulfanyl-N(6)-dimethylallyladenosine(37) in tRNA + (sulfur carrier)-H + 5'-deoxyadenosine + L-methionine + A + S-adenosyl-L-homocysteine + 2 H(+). Its function is as follows. Catalyzes the methylthiolation of N6-(dimethylallyl)adenosine (i(6)A), leading to the formation of 2-methylthio-N6-(dimethylallyl)adenosine (ms(2)i(6)A) at position 37 in tRNAs that read codons beginning with uridine. The chain is tRNA-2-methylthio-N(6)-dimethylallyladenosine synthase from Mycobacterium sp. (strain KMS).